The primary structure comprises 386 residues: CRISPR system endoribonuclease Csm6' (386 aa).

Residues 1–146 form a CARF domain region; sequence MRVLISAVGD…ASNENIGHDN (146 aa). The tract at residues 147–386 is HEPN domain; the sequence is DENIDELIEV…LNKILLTKLN (240 aa).

This sequence belongs to the CRISPR-associated Csm6 family. In terms of assembly, homodimer. The composite ssRNase active site is formed at the dimer interface.

Non-specific ssRNase activity is stimulated about 1000-fold by cyclic oligoadenylate (cOA), a second messenger produced by Cas10 of the ternary Csm effector complex in the presence of a cognate target RNA. Its function is as follows. CRISPR (clustered regularly interspaced short palindromic repeat) is an adaptive immune system that provides protection against mobile genetic elements (viruses, transposable elements and conjugative plasmids). CRISPR clusters contain spacers, sequences complementary to antecedent mobile elements, and target invading nucleic acids. CRISPR clusters are transcribed and processed into CRISPR RNA (crRNA). The type III-A Csm complex binds crRNA and acts as a crRNA-guided RNase, DNase and cyclic oligoadenylate synthase; binding of target RNA cognate to the crRNA is required for all activities. In a heterologous host this Csm effector complex restricts ssRNA phage MS2, suggesting it may target RNA viruses in vivo. This protein is not part of the Csm complex. Csm functions as a non-specific ssDNase. Base-pairing between crRNA and target RNA to form a ternary Csm complex activates a ssDNase activity; target RNA cleavage suppresses the ssDNase, a temporal control that prevents uncontrolled DNA degradation. Viral RNA transcripts probably tether the Csm complex to the viral genome, recruiting Cas10 ssDNA activity which is able to degrade DNA in the transcription bubble, spatially controlling the DNase activity. In terms of biological role, a single-strand-specific endoribonuclease (ssRNase) that is approximately 1000-fold stimulated by cyclic oligoadenylate (cOA); although several species of cOA are synthesized by this organism only cyclic hexaadenylate (cA6) stimulates the ssRNase activity. Cleaves preferentially within GA or AA dinucleotides, although the presence of cA6 broadens the preference. This chain is CRISPR system endoribonuclease Csm6', found in Streptococcus thermophilus.